The following is a 171-amino-acid chain: Protein hunchback (171 aa).

Disordered regions lie at residues 14–93 and 124–171; these read PMSH…PMQI and SNDK…KYMA. Residues 17–31 show a composition bias toward basic residues; sequence HHHHHSHHSHGHHHS. Low complexity-rich tracts occupy residues 32 to 42 and 52 to 80; these read NSNSNASSPRQ and SSSN…DTPL. Basic and acidic residues predominate over residues 152–171; sequence EPEKDHDLMSNSSEDMKYMA.

The protein belongs to the hunchback C2H2-type zinc-finger protein family.

The protein resides in the nucleus. In terms of biological role, gap class segmentation protein that controls development of head structures. The polypeptide is Protein hunchback (hb) (Scaptomyza albovittata (Fruit fly)).